Here is a 347-residue protein sequence, read N- to C-terminus: uncharacterized protein (347 aa).

Belongs to the MG067/MG068/MG395 family.

This is an uncharacterized protein from Mycoplasma pneumoniae (strain ATCC 29342 / M129 / Subtype 1) (Mycoplasmoides pneumoniae).